Here is a 252-residue protein sequence, read N- to C-terminus: 2-succinyl-6-hydroxy-2,4-cyclohexadiene-1-carboxylate synthase (252 aa).

The protein belongs to the AB hydrolase superfamily. MenH family. Monomer.

The catalysed reaction is 5-enolpyruvoyl-6-hydroxy-2-succinyl-cyclohex-3-ene-1-carboxylate = (1R,6R)-6-hydroxy-2-succinyl-cyclohexa-2,4-diene-1-carboxylate + pyruvate. Its pathway is quinol/quinone metabolism; 1,4-dihydroxy-2-naphthoate biosynthesis; 1,4-dihydroxy-2-naphthoate from chorismate: step 3/7. The protein operates within quinol/quinone metabolism; menaquinone biosynthesis. In terms of biological role, catalyzes a proton abstraction reaction that results in 2,5-elimination of pyruvate from 2-succinyl-5-enolpyruvyl-6-hydroxy-3-cyclohexene-1-carboxylate (SEPHCHC) and the formation of 2-succinyl-6-hydroxy-2,4-cyclohexadiene-1-carboxylate (SHCHC). The sequence is that of 2-succinyl-6-hydroxy-2,4-cyclohexadiene-1-carboxylate synthase from Salmonella newport (strain SL254).